Consider the following 306-residue polypeptide: MSTLGHQYDNSLVSNAFGFLRLPMNFQPYDSDADWVITGVPFDMATSGRAGGRHGPAAIRQVSTNLAWEHNRFPWNFDMRERLNVVDCGDLVYAFGDAREMSEKLQAHAEKLLAAGKRMLSFGGDHFVTLPLLRAHAKHFGKMALVHFDAHTDTYANGCEFDHGTMFYTAPKEGLIDPNHSVQIGIRTEFDKDNGFTVLDACQVNDRSVDDVIAQVKQIVGDMPVYLTFDIDCLDPAFAPGTGTPVIGGLTSDRAIKLVRGLKDLNIVGMDVVEVAPAYDQSEITALAAATLALEMLYIQAAKKSE.

H126, D149, H151, D153, D230, and D232 together coordinate Mn(2+).

The protein belongs to the arginase family. Agmatinase subfamily. Mn(2+) serves as cofactor.

The enzyme catalyses agmatine + H2O = urea + putrescine. It participates in amine and polyamine biosynthesis; putrescine biosynthesis via agmatine pathway; putrescine from agmatine: step 1/1. Functionally, catalyzes the formation of putrescine from agmatine. The protein is Agmatinase of Shigella dysenteriae serotype 1 (strain Sd197).